The primary structure comprises 405 residues: Angiopoietin-related protein 4 (405 aa).

A signal peptide spans 1–23 (MRCAPTAGAALVLCAATAGLLSA). The stretch at 54-146 (GLREHVERTR…QNLQSQIDLL (93 aa)) forms a coiled coil. The N-linked (GlcNAc...) asparagine glycan is linked to Asn176. In terms of domain architecture, Fibrinogen C-terminal spans 178-400 (TRLHRPPRDC…ATTLLIQPME (223 aa)). Cys187 and Cys215 form a disulfide bridge. Asn231 and Asn237 each carry an N-linked (GlcNAc...) asparagine glycan. A disulfide bridge links Cys340 with Cys353.

Homooligomer; disulfide-linked via Cys residues in the N-terminal part of the protein. The homooligomer undergoes proteolytic processing to release its carboxyl fibrinogen-like domain, which circulates as a monomer. The homooligomer unprocessed form is able to interact with the extracellular matrix. Post-translationally, N-glycosylated. In terms of processing, forms disulfide-linked dimers and tetramers. Cleaved into a smaller N-terminal chain and a larger chain that contains the fibrinogen C-terminal domain; both cleaved and uncleaved forms are detected in the extracellular space. The cleaved form is not present within the cell.

The protein localises to the secreted. It localises to the extracellular space. Its subcellular location is the extracellular matrix. Functionally, mediates inactivation of the lipoprotein lipase LPL, and thereby plays a role in the regulation of triglyceride clearance from the blood serum and in lipid metabolism. May also play a role in regulating glucose homeostasis and insulin sensitivity. Inhibits proliferation, migration, and tubule formation of endothelial cells and reduces vascular leakage. Upon heterologous expression, inhibits the adhesion of endothelial cell to the extracellular matrix (ECM), and inhibits the reorganization of the actin cytoskeleton, formation of actin stress fibers and focal adhesions in endothelial cells that have adhered to ANGPTL4-containing ECM (in vitro). Depending on context, may modulate tumor-related angiogenesis. Mediates inactivation of the lipoprotein lipase LPL, and thereby plays an important role in the regulation of triglyceride clearance from the blood serum and in lipid metabolism. Has higher activity in LPL inactivation than the uncleaved protein. This is Angiopoietin-related protein 4 (Angptl4) from Rattus norvegicus (Rat).